A 155-amino-acid chain; its full sequence is MQIQQIEGGFGAQDARIALVVSRFNDFIGQKLVEGAIDCIRRNGGSEENIAIYRCPGAFELPMVAKKVALTGKYDAVVTLGAIIRGSTPHFDVIAAEATKGIAQASLETGVPIAFGVLTTENIEQAIERAGTKAGNKGFDAALTAIEMINLYRAM.

5-amino-6-(D-ribitylamino)uracil is bound by residues phenylalanine 24, 58–60 (AFE), and 82–84 (AII). Residue 87–88 (ST) coordinates (2S)-2-hydroxy-3-oxobutyl phosphate. Histidine 90 serves as the catalytic Proton donor. Position 115 (phenylalanine 115) interacts with 5-amino-6-(D-ribitylamino)uracil. Arginine 129 lines the (2S)-2-hydroxy-3-oxobutyl phosphate pocket.

Belongs to the DMRL synthase family.

It catalyses the reaction (2S)-2-hydroxy-3-oxobutyl phosphate + 5-amino-6-(D-ribitylamino)uracil = 6,7-dimethyl-8-(1-D-ribityl)lumazine + phosphate + 2 H2O + H(+). Its pathway is cofactor biosynthesis; riboflavin biosynthesis; riboflavin from 2-hydroxy-3-oxobutyl phosphate and 5-amino-6-(D-ribitylamino)uracil: step 1/2. Its function is as follows. Catalyzes the formation of 6,7-dimethyl-8-ribityllumazine by condensation of 5-amino-6-(D-ribitylamino)uracil with 3,4-dihydroxy-2-butanone 4-phosphate. This is the penultimate step in the biosynthesis of riboflavin. In Chlorobium phaeovibrioides (strain DSM 265 / 1930) (Prosthecochloris vibrioformis (strain DSM 265)), this protein is 6,7-dimethyl-8-ribityllumazine synthase.